We begin with the raw amino-acid sequence, 311 residues long: DNA-directed RNA polymerase subunit alpha (311 aa).

The segment at 1 to 227 is alpha N-terminal domain (alpha-NTD); the sequence is MAQFQIECIE…NLFCSLRNLD (227 aa). The tract at residues 239–311 is alpha C-terminal domain (alpha-CTD); the sequence is DKKISQVLIE…GISLPKEKSD (73 aa).

Belongs to the RNA polymerase alpha chain family. In plastids the minimal PEP RNA polymerase catalytic core is composed of four subunits: alpha, beta, beta', and beta''. When a (nuclear-encoded) sigma factor is associated with the core the holoenzyme is formed, which can initiate transcription.

It localises to the plastid. The protein resides in the chloroplast. The enzyme catalyses RNA(n) + a ribonucleoside 5'-triphosphate = RNA(n+1) + diphosphate. Functionally, DNA-dependent RNA polymerase catalyzes the transcription of DNA into RNA using the four ribonucleoside triphosphates as substrates. This chain is DNA-directed RNA polymerase subunit alpha, found in Pyropia yezoensis (Susabi-nori).